Consider the following 252-residue polypeptide: AISLLMCLILSALCASSESAVVHGDDFAAERAVKSSPYLVLSPADEMVGMSTANEAFDKSPSYYDDDDDDFVNNEKRRLRFHKRRIRFHKRPQEVSGLKPVMMSRASASADENSLFDLYNTDGAMYQRELRAPRLRFYSLRKRAAGDEDKAEEHNPETESHSRRKRSALTPSIRSLRSSLESGIAKISINQDLKAIADMLIVEQKQEREKYLADLRQRLLNKGKRSSEVALAASDKGDEERELLNTLSNLLE.

A signal peptide spans 1-19 (AISLLMCLILSALCASSES). 3 consecutive propeptides follow at residues 20 to 75 (AVVH…VNNE), 92 to 130 (PQEV…QREL), and 144 to 185 (AAGD…SGIA). Positions 145 to 161 (AGDEDKAEEHNPETESH) are enriched in basic and acidic residues. The interval 145-171 (AGDEDKAEEHNPETESHSRRKRSALTP) is disordered. Residue Lys-222 is modified to Lysine amide.

Belongs to the molluscan ELH family. In terms of tissue distribution, bag cell neurons.

It is found in the secreted. Its function is as follows. ELH acts as a neurotransmitter locally, upon neurons of the abdominal ganglion and as a hormone by diffusing into the circulating hemolymph and modulating the activity of other organs. It specifically causes contraction of smooth muscle in the ovotestis and expulsion of the egg string. Functionally, alpha-BCP decreases the activity of a cluster of neurons in the left upper quadrant of the abdominal ganglion. Beta-BCP specifically excites 2 neurons, L1 and R1, in the abdominal ganglion. The chain is ELH type 2 (ELH2) from Aplysia parvula (Dwarf sea hare).